Here is a 164-residue protein sequence, read N- to C-terminus: Respiratory growth induced protein 2 (164 aa).

This sequence belongs to the RGI1 family.

Its subcellular location is the cytoplasm. Involved in the control of energetic metabolism and significantly contribute to cell fitness, especially under respiratory growth conditions. The chain is Respiratory growth induced protein 2 (RGI2) from Saccharomyces cerevisiae (strain JAY291) (Baker's yeast).